The sequence spans 208 residues: Protein GrpE (208 aa).

Over residues 1–25 the composition is skewed to basic and acidic residues; that stretch reads MVDNKDFNEELKENIQEELDNETKA. Residues 1–38 are disordered; that stretch reads MVDNKDFNEELKENIQEELDNETKAENPNIDEEVEEVS. Residues 29–38 show a composition bias toward acidic residues; the sequence is NIDEEVEEVS.

The protein belongs to the GrpE family. As to quaternary structure, homodimer.

Its subcellular location is the cytoplasm. In terms of biological role, participates actively in the response to hyperosmotic and heat shock by preventing the aggregation of stress-denatured proteins, in association with DnaK and GrpE. It is the nucleotide exchange factor for DnaK and may function as a thermosensor. Unfolded proteins bind initially to DnaJ; upon interaction with the DnaJ-bound protein, DnaK hydrolyzes its bound ATP, resulting in the formation of a stable complex. GrpE releases ADP from DnaK; ATP binding to DnaK triggers the release of the substrate protein, thus completing the reaction cycle. Several rounds of ATP-dependent interactions between DnaJ, DnaK and GrpE are required for fully efficient folding. This chain is Protein GrpE, found in Clostridium perfringens (strain ATCC 13124 / DSM 756 / JCM 1290 / NCIMB 6125 / NCTC 8237 / Type A).